A 148-amino-acid chain; its full sequence is Auxin-responsive protein SAUR65 (148 aa).

The protein belongs to the ARG7 family.

The protein localises to the cell membrane. Functionally, may promote auxin-stimulated organ elongation, such as hypocotyls, stamen filaments and petals. This chain is Auxin-responsive protein SAUR65, found in Arabidopsis thaliana (Mouse-ear cress).